A 171-amino-acid chain; its full sequence is GTP-dependent dephospho-CoA kinase (171 aa).

Residues Asp49, Val51, Asp68, and Glu122 each coordinate GTP.

This sequence belongs to the GTP-dependent DPCK family.

It catalyses the reaction 3'-dephospho-CoA + GTP = GDP + CoA + H(+). It functions in the pathway cofactor biosynthesis; coenzyme A biosynthesis. Its function is as follows. Catalyzes the GTP-dependent phosphorylation of the 3'-hydroxyl group of dephosphocoenzyme A to form coenzyme A (CoA). The chain is GTP-dependent dephospho-CoA kinase from Hyperthermus butylicus (strain DSM 5456 / JCM 9403 / PLM1-5).